Consider the following 251-residue polypeptide: Hydroxyacylglutathione hydrolase (251 aa).

7 residues coordinate Zn(2+): H53, H55, D57, H58, H110, D127, and H165.

The protein belongs to the metallo-beta-lactamase superfamily. Glyoxalase II family. As to quaternary structure, monomer. The cofactor is Zn(2+).

The catalysed reaction is an S-(2-hydroxyacyl)glutathione + H2O = a 2-hydroxy carboxylate + glutathione + H(+). It participates in secondary metabolite metabolism; methylglyoxal degradation; (R)-lactate from methylglyoxal: step 2/2. In terms of biological role, thiolesterase that catalyzes the hydrolysis of S-D-lactoyl-glutathione to form glutathione and D-lactic acid. The chain is Hydroxyacylglutathione hydrolase from Escherichia coli O6:K15:H31 (strain 536 / UPEC).